Reading from the N-terminus, the 463-residue chain is Oxidoreductase OXR1 (463 aa).

6-hydroxy-FAD-binding positions include 59–63, valine 154, and aspartate 366; that span reads GGSYS.

This sequence belongs to the FAD-dependent oxidoreductase family. Requires 6-hydroxy-FAD as cofactor.

It participates in siderophore biosynthesis. Oxidoreductase; part of the gene cluster that mediates the biosynthesis of hydroxamate-containing siderophores that play a critical role in virulence via intracellular iron acquisition during macrophage infection. This Ajellomyces capsulatus (Darling's disease fungus) protein is Oxidoreductase OXR1.